Here is a 504-residue protein sequence, read N- to C-terminus: MFPREKTWNISFAGCGFLGVYYVGVASCLREHAPFLVANATHIYGASAGALTATALVTGVCLGEAGAKFIEVSKEARKRFLGPLHPSFNLVKIIRSFLLKVLPADSHEHASGRLGISLTRVSDGENVIISHFNSKDELIQANVCSGFIPVYCGLIPPSLQGVRYVDGGISDNLPLYELKNTITVSPFSGESDICPQDSSTNIHELRVTNTSIQFNLRNLYRLSKALFPPEPLVLREMCKQGYRDGLRFLQRNGLLNRPNPLLALPPARPHGPEDKDQAVESAQAEDYSQLPGEDHILEHLPARLNEALLEACVEPTDLLTTLSNMLPVRLATAMMVPYTLPLESALSFTIRLLEWLPDVPEDIRWMKEQTGSICQYLVMRAKRKLGRHLPSRLPEQVELRRVQSLPSVPLSCAAYREALPGWMRNNLSLGDALAKWEECQRQLLLGLFCTNVAFPPEALRMRAPADPAPAPADPASPQHQLAGPAPLLSTPAPEARPVIGALGL.

At 1-8 (MFPREKTW) the chain is on the cytoplasmic side. A helical membrane pass occupies residues 9 to 29 (NISFAGCGFLGVYYVGVASCL). A PNPLA domain is found at 10-179 (ISFAGCGFLG…SDNLPLYELK (170 aa)). The GXGXXG motif lies at 14 to 19 (GCGFLG). At 30–42 (REHAPFLVANATH) the chain is on the extracellular side. A glycan (N-linked (GlcNAc...) asparagine) is linked at Asn-39. Residues 43 to 63 (IYGASAGALTATALVTGVCLG) form a helical membrane-spanning segment. The GXSXG motif lies at 45-49 (GASAG). Ser-47 (nucleophile) is an active-site residue. Residues 64 to 137 (EAGAKFIEVS…IISHFNSKDE (74 aa)) are Cytoplasmic-facing. A Glycyl lysine isopeptide (Lys-Gly) (interchain with G-Cter in ubiquitin) cross-link involves residue Lys-92. Residues 138-158 (LIQANVCSGFIPVYCGLIPPS) traverse the membrane as a helical segment. Topologically, residues 159–329 (LQGVRYVDGG…TTLSNMLPVR (171 aa)) are extracellular. Residue Asp-166 is the Proton acceptor of the active site. Positions 166–168 (DGG) match the DGA/G motif. A helical membrane pass occupies residues 330–350 (LATAMMVPYTLPLESALSFTI). Over 351–504 (RLLEWLPDVP…ARPVIGALGL (154 aa)) the chain is Cytoplasmic. Ser-372 is subject to Phosphoserine; in vitro. Ser-404 is modified (phosphoserine; by PKA and FAM20C). Ser-428 is subject to Phosphoserine. Residues 463–492 (APADPAPAPADPASPQHQLAGPAPLLSTPA) form a disordered region.

In terms of assembly, interacts with ABHD5; this association stimulates PNPLA2 triglyceride hydrolase activity. Interacts with SERPINF1; this interaction stimulates the phospholipase A2 activity of PNPLA2. Despite a colocalization in lipid droplets, it probably does not interact with PLIN. Interacts with PLIN5; prevents interaction with ABHD5. Interacts with FAF2. Post-translationally, phosphorylation at Ser-404 by PKA is increased during fasting and moderate intensity exercise, and moderately increases lipolytic activity. Phosphorylation at Ser-404 is increased upon beta-adrenergic stimulation. In terms of processing, ubiquitinated by PEX2 in response to reactive oxygen species (ROS), leading to its degradation. Ubiquitination is stimulated by LDAH. Highest expression in adipose tissue. Also detected in heart, skeletal muscle, and portions of the gastrointestinal tract. Detected in normal retina and retinoblastoma cells. Detected in retinal pigment epithelium and, at lower intensity, in the inner segments of photoreceptors and in the ganglion cell layer of the neural retina (at protein level).

It is found in the lipid droplet. It localises to the cell membrane. The protein localises to the cytoplasm. The enzyme catalyses a triacylglycerol + H2O = a diacylglycerol + a fatty acid + H(+). It carries out the reaction a triacylglycerol + H2O = a 1,2-diacylglycerol + a fatty acid + H(+). It catalyses the reaction a triacylglycerol + H2O = a 1,3-diacylglycerol + a fatty acid + H(+). The catalysed reaction is a triacyl-sn-glycerol + H2O = a 1,3-diacyl-sn-glycerol + a fatty acid + H(+). The enzyme catalyses a triacyl-sn-glycerol + H2O = a 2,3-diacyl-sn-glycerol + a fatty acid + H(+). It carries out the reaction a 1-acylglycerol + a 1,3-diacylglycerol = a triacylglycerol + glycerol. It catalyses the reaction a 1-acylglycerol + a 1,2-diacylglycerol = a triacylglycerol + glycerol. The catalysed reaction is 2 a 1-acylglycerol = a 1,2-diacylglycerol + glycerol. The enzyme catalyses a triacylglycerol + all-trans-retinol = an all-trans-retinyl ester + a diacylglycerol. It carries out the reaction 1,2-di-(9Z-octadecenoyl)-glycerol + (9Z)-octadecenoate + H(+) = 1,2,3-tri-(9Z-octadecenoyl)-glycerol + H2O. It catalyses the reaction 1,2,3-tri-(9Z-octadecenoyl)-glycerol + H2O = 1,3-di-(9Z-octadecenoyl)-glycerol + (9Z)-octadecenoate + H(+). The catalysed reaction is 1-(9Z-octadecenoyl)-glycerol + 1,3-di-(9Z-octadecenoyl)-glycerol = 1,2,3-tri-(9Z-octadecenoyl)-glycerol + glycerol. The enzyme catalyses 1-(9Z-octadecenoyl)-glycerol + 1,2-di-(9Z-octadecenoyl)-glycerol = 1,2,3-tri-(9Z-octadecenoyl)-glycerol + glycerol. It carries out the reaction 2 1-(9Z-octadecenoyl)-glycerol = 1,2-di-(9Z-octadecenoyl)-glycerol + glycerol. It catalyses the reaction 1,2,3-tri-(9Z-octadecenoyl)-glycerol + all-trans-retinol = all-trans-retinyl 9Z-octadecenoate + di-(9Z)-octadecenoylglycerol. The catalysed reaction is 1,2,3-tri-(9Z)-hexadecenoylglycerol + H2O = 1,3-di-(9Z)-hexadecenoylglycerol + (9Z)-hexadecenoate + H(+). The enzyme catalyses 1,2,3-tri-(9Z,12Z)-octadecadienoylglycerol + H2O = 1,3-di-(9Z,12Z)-octadecadienoylglycerol + (9Z,12Z)-octadecadienoate + H(+). It carries out the reaction 1,2,3-tri-(9Z,12Z,15Z)-octadecatrienoylglycerol + H2O = 1,3-di-(9Z,12Z,15Z)-octadecatrienoylglycerol + (9Z,12Z,15Z)-octadecatrienoate + H(+). It catalyses the reaction 1,3-di-(9Z)-octadecenoyl-2-hexadecanoylglycerol + H2O = 1,3-di-(9Z-octadecenoyl)-glycerol + hexadecanoate + H(+). The catalysed reaction is 1,2-di-(9Z)-octadecenoyl-3-hexadecanoyl-sn-glycerol + H2O = 1-(9Z)-octadecenoyl-3-hexadecanoyl-sn-glycerol + (9Z)-octadecenoate + H(+). The enzyme catalyses 1-hexadecanoyl-2,3-di-(9Z)-octadecenoyl-sn-glycerol + H2O = 1-hexadecanoyl-3-(9Z)-octadecenoyl-sn-glycerol + (9Z)-octadecenoate + H(+). It carries out the reaction 1,2,3-tri-(9Z-octadecenoyl)-glycerol + H2O = 2,3-di-(9Z)-octadecenoyl-sn-glycerol + (9Z)-octadecenoate + H(+). It catalyses the reaction 1,2,3-tri-(9Z)-hexadecenoylglycerol + H2O = 2,3-di-(9Z)-hexadecenoyl-sn-glycerol + (9Z)-hexadecenoate + H(+). The catalysed reaction is 1,2,3-tri-(9Z,12Z)-octadecadienoylglycerol + H2O = 2,3-di-(9Z,12Z)-octadecadienoyl-sn-glycerol + (9Z,12Z)-octadecadienoate + H(+). The enzyme catalyses 1,2,3-tri-(9Z,12Z,15Z)-octadecatrienoylglycerol + H2O = 2,3-di-(9Z,12Z,15Z)-octadecatrienoyl-sn-glycerol + (9Z,12Z,15Z)-octadecatrienoate + H(+). It carries out the reaction 1,3-di-(9Z)-octadecenoyl-2-hexadecanoylglycerol + H2O = 2-hexadecanoyl-3-(9Z)-octadecenoyl-sn-glycerol + (9Z)-octadecenoate + H(+). It catalyses the reaction 1-hexadecanoyl-2,3-di-(9Z)-octadecenoyl-sn-glycerol + H2O = 2,3-di-(9Z)-octadecenoyl-sn-glycerol + hexadecanoate + H(+). The catalysed reaction is 1,2-di-(9Z)-octadecenoyl-3-hexadecanoyl-sn-glycerol + H2O = 2-(9Z-octadecenoyl)-3-hexadecanoyl-sn-glycerol + (9Z)-octadecenoate + H(+). The enzyme catalyses a 1,2-diacyl-sn-glycero-3-phosphocholine + H2O = a 1-acyl-sn-glycero-3-phosphocholine + a fatty acid + H(+). It carries out the reaction 1,2,3-tri-(9Z-octadecenoyl)-glycerol + 9-hydroxy-octadecanoate = 9-(9Z-octadecenoyloxy)-octadecanoate + 2,3-di-(9Z)-octadecenoyl-sn-glycerol. It catalyses the reaction 1-hexadecanoyl-2,3-di-(9Z)-octadecenoyl-sn-glycerol + 9-hydroxy-octadecanoate = 9-hexadecanoyloxy-octadecanoate + 2,3-di-(9Z)-octadecenoyl-sn-glycerol. The catalysed reaction is 1,2,3-tri-(10Z)-heptadecenoylglycerol + 9-hydroxy-octadecanoate = 2,3-di-(10Z-heptadecenoyl)-sn-glycerol + 9-(10Z-heptadecenoyloxy)-octadecanoate. The enzyme catalyses 1,2,3-tri-(9Z,12Z)-octadecadienoylglycerol + 9-hydroxy-octadecanoate = 2,3-di-(9Z,12Z)-octadecadienoyl-sn-glycerol + 9-(9Z,12Z-octadecadienoyloxy)-octadecanoate. It carries out the reaction 1,2,3-tri-(9Z)-hexadecenoylglycerol + 9-hydroxy-octadecanoate = 2,3-di-(9Z)-hexadecenoyl-sn-glycerol + 9-(9Z-hexadecenoyloxy)-octadecanoate. It catalyses the reaction 9-hydroxy-octadecanoate + 1,2-di-(9Z-octadecenoyl)-sn-glycerol = 9-(9Z-octadecenoyloxy)-octadecanoate + 2-(9Z-octadecenoyl)-glycerol. The catalysed reaction is 1-hexadecanoyl-2,3-di-(9Z)-octadecenoyl-sn-glycerol + 9-hydroxy-octadecanoate = 1-hexadecanoyl-3-(9Z)-octadecenoyl-sn-glycerol + 9-(9Z-octadecenoyloxy)-octadecanoate. It participates in glycerolipid metabolism; triacylglycerol degradation. The triglyceride lipase activity is inhibited by BEL ((E)-6-(bromomethylene)-3-(1-naphthalenyl)-2H-tetrahydropyran-2-one), a suicide substrate inhibitor. No differences in the acylglycerol transacylase was detected in the presence or absence of ATP. Catalyzes the initial step in triglyceride hydrolysis in adipocyte and non-adipocyte lipid droplets. Exhibits a strong preference for the hydrolysis of long-chain fatty acid esters at the sn-2 position of the glycerol backbone and acts coordinately with LIPE/HLS and DGAT2 within the lipolytic cascade. Also possesses acylglycerol transacylase and phospholipase A2 activities. Transfers fatty acid from triglyceride to retinol, hydrolyzes retinylesters, and generates 1,3-diacylglycerol from triglycerides. Regulates adiposome size and may be involved in the degradation of adiposomes. Catalyzes the formation of an ester bond between hydroxy fatty acids and fatty acids derived from triglycerides or diglycerides to generate fatty acid esters of hydroxy fatty acids (FAHFAs) in adipocytes. Acts antagonistically with LDAH in regulation of cellular lipid stores. Inhibits LDAH-stimulated lipid droplet fusion. May play an important role in energy homeostasis. May play a role in the response of the organism to starvation, enhancing hydrolysis of triglycerides and providing free fatty acids to other tissues to be oxidized in situations of energy depletion. The protein is Patatin-like phospholipase domain-containing protein 2 of Homo sapiens (Human).